The primary structure comprises 336 residues: Glycerol-3-phosphate dehydrogenase [NAD(P)+] (336 aa).

5 residues coordinate NADPH: Ser14, Trp15, Arg35, Arg36, and Lys109. Lys109 and Gly139 together coordinate sn-glycerol 3-phosphate. Position 143 (Ala143) interacts with NADPH. Sn-glycerol 3-phosphate contacts are provided by Lys194, Asp247, Ser257, Arg258, and Asn259. The active-site Proton acceptor is the Lys194. Residue Arg258 coordinates NADPH. Glu284 is a binding site for NADPH.

It belongs to the NAD-dependent glycerol-3-phosphate dehydrogenase family.

The protein resides in the cytoplasm. It catalyses the reaction sn-glycerol 3-phosphate + NAD(+) = dihydroxyacetone phosphate + NADH + H(+). The catalysed reaction is sn-glycerol 3-phosphate + NADP(+) = dihydroxyacetone phosphate + NADPH + H(+). It participates in membrane lipid metabolism; glycerophospholipid metabolism. In terms of biological role, catalyzes the reduction of the glycolytic intermediate dihydroxyacetone phosphate (DHAP) to sn-glycerol 3-phosphate (G3P), the key precursor for phospholipid synthesis. In Streptomyces coelicolor (strain ATCC BAA-471 / A3(2) / M145), this protein is Glycerol-3-phosphate dehydrogenase [NAD(P)+].